Consider the following 955-residue polypeptide: Bifunctional glutamine synthetase adenylyltransferase/adenylyl-removing enzyme (955 aa).

The adenylyl removase stretch occupies residues 1–458; that stretch reads MTAQAPLSVA…QFEQTFSDKQ (458 aa). Residues 464–955 are adenylyl transferase; that stretch reads CAAIWHADLL…GSIDAASPTP (492 aa).

Belongs to the GlnE family. Mg(2+) is required as a cofactor.

The catalysed reaction is [glutamine synthetase]-O(4)-(5'-adenylyl)-L-tyrosine + phosphate = [glutamine synthetase]-L-tyrosine + ADP. It carries out the reaction [glutamine synthetase]-L-tyrosine + ATP = [glutamine synthetase]-O(4)-(5'-adenylyl)-L-tyrosine + diphosphate. Functionally, involved in the regulation of glutamine synthetase GlnA, a key enzyme in the process to assimilate ammonia. When cellular nitrogen levels are high, the C-terminal adenylyl transferase (AT) inactivates GlnA by covalent transfer of an adenylyl group from ATP to specific tyrosine residue of GlnA, thus reducing its activity. Conversely, when nitrogen levels are low, the N-terminal adenylyl removase (AR) activates GlnA by removing the adenylyl group by phosphorolysis, increasing its activity. The regulatory region of GlnE binds the signal transduction protein PII (GlnB) which indicates the nitrogen status of the cell. This Ralstonia nicotianae (strain ATCC BAA-1114 / GMI1000) (Ralstonia solanacearum) protein is Bifunctional glutamine synthetase adenylyltransferase/adenylyl-removing enzyme.